Here is a 329-residue protein sequence, read N- to C-terminus: MMEKAMKYAKIAGSGGYLPERVVTNDDLAAELATRQISTSDEWIVERTGIRQRHLAERGVTTSQLATEAARRAMDDAGVQADEIDMIIVATSTPDYVFPSTACLVQANLGAKGGATFDVQAVCSGFVYAMTTADSFIRAGRARCALVIGAEVFSRILDWNDRGTCVLFGDGAGAVVLKAADEPGILAAHLHADGSQTKILCAAGNVAYGDVTGDPFLRMDGQAVFKQAVTVLDRSARDVCAEAGVEVDDIDWLIPHQANVRILNFLARKLRVPTERVVITVDQHANTSAASVPLALDVARRDGRVKPGQLVLMQGVGGGFTWGSVLARM.

Catalysis depends on residues Cys123 and His256. Positions 257–261 (QANVR) are ACP-binding. Asn286 is an active-site residue.

It belongs to the thiolase-like superfamily. FabH family. Homodimer.

Its subcellular location is the cytoplasm. The enzyme catalyses malonyl-[ACP] + acetyl-CoA + H(+) = 3-oxobutanoyl-[ACP] + CO2 + CoA. The protein operates within lipid metabolism; fatty acid biosynthesis. Catalyzes the condensation reaction of fatty acid synthesis by the addition to an acyl acceptor of two carbons from malonyl-ACP. Catalyzes the first condensation reaction which initiates fatty acid synthesis and may therefore play a role in governing the total rate of fatty acid production. Possesses both acetoacetyl-ACP synthase and acetyl transacylase activities. Its substrate specificity determines the biosynthesis of branched-chain and/or straight-chain of fatty acids. In Bordetella parapertussis (strain 12822 / ATCC BAA-587 / NCTC 13253), this protein is Beta-ketoacyl-[acyl-carrier-protein] synthase III.